We begin with the raw amino-acid sequence, 305 residues long: Coiled-coil domain-containing protein 69 (305 aa).

The N-myristoyl glycine moiety is linked to residue glycine 2. Positions 13–41 (LRKKKRQKAHQEGLTSKELNDLNAKSQEP) are disordered. Coiled-coil stretches lie at residues 42-167 (NELL…SVLS) and 216-278 (MERN…KEQN).

This sequence belongs to the CCDC69 family.

It is found in the cytoplasm. It localises to the cytoskeleton. The protein resides in the spindle. The protein localises to the midbody. Functionally, may act as a scaffold to regulate the recruitment and assembly of spindle midzone components. This is Coiled-coil domain-containing protein 69 (ccdc69) from Xenopus tropicalis (Western clawed frog).